Consider the following 319-residue polypeptide: 4-diphosphocytidyl-2-C-methyl-D-erythritol kinase (319 aa).

Residue K21 is part of the active site. 106–116 (PIGAGLAGGSS) is a binding site for ATP. D148 is an active-site residue.

The protein belongs to the GHMP kinase family. IspE subfamily.

The catalysed reaction is 4-CDP-2-C-methyl-D-erythritol + ATP = 4-CDP-2-C-methyl-D-erythritol 2-phosphate + ADP + H(+). It participates in isoprenoid biosynthesis; isopentenyl diphosphate biosynthesis via DXP pathway; isopentenyl diphosphate from 1-deoxy-D-xylulose 5-phosphate: step 3/6. Catalyzes the phosphorylation of the position 2 hydroxy group of 4-diphosphocytidyl-2C-methyl-D-erythritol. The polypeptide is 4-diphosphocytidyl-2-C-methyl-D-erythritol kinase (Prochlorococcus marinus (strain SARG / CCMP1375 / SS120)).